The chain runs to 157 residues: Glutaredoxin-2, mitochondrial (157 aa).

The N-terminal 19 residues, 1–19 (MSWYRAASVGRRLVASGRI), are a transit peptide targeting the mitochondrion. The 101-residue stretch at 50-150 (VNQIQETISN…PLVHQCYLNK (101 aa)) folds into the Glutaredoxin domain. Residue Cys-61 participates in [2Fe-2S] cluster binding. Lys-67 is a binding site for glutathione. At Cys-70 the chain carries S-glutathionyl cysteine; alternate. A disulfide bridge links Cys-70 with Cys-73. Residues Gln-102 and Val-114 each contribute to the glutathione site. Cys-146 is a [2Fe-2S] cluster binding site.

It belongs to the glutaredoxin family. In terms of assembly, monomer; active form. Homodimer; inactive form. The homodimer is probably linked by 1 2Fe-2S cluster.

It localises to the mitochondrion. The protein localises to the nucleus. The 2Fe-2S present in the homodimer leads to inactivation of the enzyme. The 2Fe-2S may serve as a redox sensor: the presence of one-electron oxidants or reductants leading to the loss of the 2Fe-2S cluster, subsequent monomerization and activation of the enzyme. In terms of biological role, glutathione-dependent oxidoreductase that facilitates the maintenance of mitochondrial redox homeostasis upon induction of apoptosis by oxidative stress. Involved in response to hydrogen peroxide and regulation of apoptosis caused by oxidative stress. Acts as a very efficient catalyst of monothiol reactions because of its high affinity for protein glutathione-mixed disulfides. Can receive electrons not only from glutathione (GSH), but also from thioredoxin reductase supporting both monothiol and dithiol reactions. Efficiently catalyzes both glutathionylation and deglutathionylation of mitochondrial complex I, which in turn regulates the superoxide production by the complex. Overexpression decreases the susceptibility to apoptosis and prevents loss of cardiolipin and cytochrome c release. The sequence is that of Glutaredoxin-2, mitochondrial (Glrx2) from Rattus norvegicus (Rat).